The following is a 495-amino-acid chain: MDAPMEDAPAPVAQVKVIFTTTEPDLELPESKRQLLVPADIRRYGLSRILNSESMLDTGSIPFDFLINGSFLRSSLEDYLTSNGLSLETTLTLQYVRSLIPPVYEASFEHDDWVSAVDVLSATSPAGRWSSAANSSAAVQPGQERVLSASYDGLLRIWNASGSVIATSPSGSHGGHTASIKAAKFLTSDRLASAGMDRTVRVWKYTESDHFTGELKPTLELYGHTGSVDWLDVDGHSKHILTASADGAIGFWSASKASAPEPDASLLPGAHVSKRRKATSSVSTAQRGPLGLWSIHTAPATAAIFDPRDRTVAYSASQDHTVRTLDLTTGQVVSTLTLTHPLLSLSALTRAGTTSPLLAAGTSARHITMVDPRASSATTSVMTLRGHANKVVSLSPSPENEYSLVSGSHDGTCRVWDLRSVRPATKEEGSLGGVSEPVYVIERESWASKGKKKRPVAGDGCKVFSVVWDKLGIFSGGEDKKVQVNRGRNIVTEQK.

The tract at residues 15 to 97 is ubiquitin-like (UBL) domain; it reads VKVIFTTTEP…ETTLTLQYVR (83 aa). WD repeat units lie at residues 129-168, 175-213, 223-262, 264-295, 296-337, 386-426, and 458-495; these read WSSAANSSAAVQPGQERVLSASYDGLLRIWNASGSVIATS, GHTASIKAAKFLTSDRLASAGMDRTVRVWKYTESDHFTG, GHTGSVDWLDVDGHSKHILTASADGAIGFWSASKASAPEP, ASLLPGAHVSKRRKATSSVSTAQRGPLGLWSI, HTAP…STLT, GHAN…PATK, and GDGCKVFSVVWDKLGIFSGGEDKKVQVNRGRNIVTEQK.

It belongs to the WD repeat WDR12/YTM1 family. In terms of assembly, component of the NOP7 complex, composed of ERB1, NOP7 and YTM1. The complex is held together by ERB1, which interacts with NOP7 via its N-terminal domain and with YTM1 via a high-affinity interaction between the seven-bladed beta-propeller domains of the 2 proteins. The NOP7 complex associates with the 66S pre-ribosome. Interacts (via UBL domain) with MDN1 (via VWFA/MIDAS domain).

It is found in the nucleus. It localises to the nucleolus. Its subcellular location is the nucleoplasm. Component of the NOP7 complex, which is required for maturation of the 25S and 5.8S ribosomal RNAs and formation of the 60S ribosome. The protein is Ribosome biogenesis protein YTM1 of Chaetomium thermophilum (strain DSM 1495 / CBS 144.50 / IMI 039719) (Thermochaetoides thermophila).